The chain runs to 283 residues: Pantothenate synthetase (283 aa).

30–37 serves as a coordination point for ATP; the sequence is MGNLHDGH. The active-site Proton donor is histidine 37. Position 61 (glutamine 61) interacts with (R)-pantoate. Glutamine 61 contributes to the beta-alanine binding site. 149-152 is an ATP binding site; that stretch reads GEKD. Glutamine 155 contacts (R)-pantoate. Position 186–189 (186–189) interacts with ATP; sequence LSSR.

The protein belongs to the pantothenate synthetase family. In terms of assembly, homodimer.

It is found in the cytoplasm. It catalyses the reaction (R)-pantoate + beta-alanine + ATP = (R)-pantothenate + AMP + diphosphate + H(+). Its pathway is cofactor biosynthesis; (R)-pantothenate biosynthesis; (R)-pantothenate from (R)-pantoate and beta-alanine: step 1/1. In terms of biological role, catalyzes the condensation of pantoate with beta-alanine in an ATP-dependent reaction via a pantoyl-adenylate intermediate. This chain is Pantothenate synthetase, found in Escherichia coli O6:K15:H31 (strain 536 / UPEC).